Here is a 942-residue protein sequence, read N- to C-terminus: Chitin synthase 2 (942 aa).

Positions 1-13 are enriched in basic and acidic residues; that stretch reads MAYHYSHDSDRRQ. Positions 1 to 132 are disordered; the sequence is MAYHYSHDSD…PSHTDYSDED (132 aa). The span at 18 to 33 shows a compositional bias: low complexity; that stretch reads YNYPSNYSNPSQYSIP. Asn23 is a glycosylation site (N-linked (GlcNAc...) asparagine). The span at 71 to 80 shows a compositional bias: polar residues; it reads PQPTASSMTS. N-linked (GlcNAc...) asparagine glycosylation is present at Asn587. Helical transmembrane passes span 590 to 610, 625 to 645, 663 to 683, and 696 to 716; these read IFAA…GHGI, FNLL…FFLI, IFQV…VCSL, and FCIF…GWTV. An N-linked (GlcNAc...) asparagine glycan is attached at Asn736. 2 helical membrane-spanning segments follow: residues 739-759 and 770-790; these read FVQL…SSLL and FVQY…YAMC. N-linked (GlcNAc...) asparagine glycosylation is present at Asn803. Transmembrane regions (helical) follow at residues 873-893 and 916-936; these read VVLL…SSTF and IFYA…LYLI.

Belongs to the chitin synthase family. Class III subfamily.

The protein localises to the cell membrane. The enzyme catalyses [(1-&gt;4)-N-acetyl-beta-D-glucosaminyl](n) + UDP-N-acetyl-alpha-D-glucosamine = [(1-&gt;4)-N-acetyl-beta-D-glucosaminyl](n+1) + UDP + H(+). Its function is as follows. Polymerizes chitin, a structural polymer of the cell wall and septum, by transferring the sugar moiety of UDP-GlcNAc to the non-reducing end of the growing chitin polymer. The sequence is that of Chitin synthase 2 from Cryptococcus neoformans var. grubii serotype A (strain H99 / ATCC 208821 / CBS 10515 / FGSC 9487) (Filobasidiella neoformans var. grubii).